Reading from the N-terminus, the 368-residue chain is DNA replication and repair protein RecF (368 aa).

An ATP-binding site is contributed by 30–37; sequence GRNGSGKT.

It belongs to the RecF family.

It localises to the cytoplasm. Functionally, the RecF protein is involved in DNA metabolism; it is required for DNA replication and normal SOS inducibility. RecF binds preferentially to single-stranded, linear DNA. It also seems to bind ATP. The chain is DNA replication and repair protein RecF from Chlorobaculum tepidum (strain ATCC 49652 / DSM 12025 / NBRC 103806 / TLS) (Chlorobium tepidum).